The chain runs to 273 residues: Salivary glue protein Sgs-3 (273 aa).

The N-terminal stretch at methionine 1–glycine 23 is a signal peptide. The segment covering threonine 47–proline 57 has biased composition (low complexity). Residues threonine 47–cysteine 225 are disordered. Positions proline 58–threonine 67 are enriched in pro residues. The segment covering arginine 83–cysteine 225 has biased composition (low complexity).

This is Salivary glue protein Sgs-3 (Sgs3) from Drosophila yakuba (Fruit fly).